A 689-amino-acid polypeptide reads, in one-letter code: Glycine--tRNA ligase beta subunit (689 aa).

Belongs to the class-II aminoacyl-tRNA synthetase family. As to quaternary structure, tetramer of two alpha and two beta subunits.

Its subcellular location is the cytoplasm. The enzyme catalyses tRNA(Gly) + glycine + ATP = glycyl-tRNA(Gly) + AMP + diphosphate. This Cronobacter sakazakii (strain ATCC BAA-894) (Enterobacter sakazakii) protein is Glycine--tRNA ligase beta subunit.